The following is a 479-amino-acid chain: Anaerobic nitric oxide reductase flavorubredoxin (479 aa).

Residues 30–210 (LRGSSYNSYL…PFSRLVTPKI (181 aa)) form a zinc metallo-hydrolase region. Fe cation-binding residues include His79, Glu81, Asp83, His147, Asp166, and His227. A Flavodoxin-like domain is found at 254–393 (ITIFYDTMSN…LCRQHGRDIA (140 aa)). FMN is bound by residues 260-264 (TMSNN) and 342-369 (AFGS…EMSL). Residues 423–474 (GPKMQCSVCQWIYDPALGEPLQDVAPGTPWSEVPDNFLCPECSLGKDVFDVL) enclose the Rubredoxin-like domain. Fe cation contacts are provided by Cys428, Cys431, Cys461, and Cys464.

It in the N-terminal section; belongs to the zinc metallo-hydrolase group 3 family. Homotetramer. Requires Fe cation as cofactor. It depends on FMN as a cofactor.

It is found in the cytoplasm. It participates in nitrogen metabolism; nitric oxide reduction. Anaerobic nitric oxide reductase; uses NADH to detoxify nitric oxide (NO), protecting several 4Fe-4S NO-sensitive enzymes. Has at least 2 reductase partners, only one of which (NorW, flavorubredoxin reductase) has been identified. NO probably binds to the di-iron center; electrons enter from the NorW at rubredoxin and are transferred sequentially to the FMN center and the di-iron center. Also able to function as an aerobic oxygen reductase. The polypeptide is Anaerobic nitric oxide reductase flavorubredoxin (Salmonella paratyphi A (strain ATCC 9150 / SARB42)).